The chain runs to 258 residues: MEEQGTGIRVEALSAEFAAQAAAWAERLELPLHDEAADFAVQVGADGLQIQQLGPQAPGPVRVDFVEGQAAHRRQFGGGNGQMIAKAVGIAQGVRPQVLDATAGLGKDAFVLASLGCQMTLIERQPLIAALLEDGLARARADEEVGAIVGRMRLLTGNAIERMRAWEGEPPQVIYLDPMFPHRDKSALVKKEMRVFRPLVGDDLDAPALLEAALALASHRVVVKRPRKAPIIDGPKPSHSLEGKSSRYDIYPKKALKA.

S-adenosyl-L-methionine-binding positions include 123–124 and D177; that span reads ER. A disordered region spans residues 232 to 258; that stretch reads IDGPKPSHSLEGKSSRYDIYPKKALKA. The segment covering 239-252 has biased composition (basic and acidic residues); the sequence is HSLEGKSSRYDIYP.

The protein belongs to the methyltransferase superfamily. RsmJ family.

The protein localises to the cytoplasm. It carries out the reaction guanosine(1516) in 16S rRNA + S-adenosyl-L-methionine = N(2)-methylguanosine(1516) in 16S rRNA + S-adenosyl-L-homocysteine + H(+). Its function is as follows. Specifically methylates the guanosine in position 1516 of 16S rRNA. The sequence is that of Ribosomal RNA small subunit methyltransferase J from Pseudomonas putida (strain GB-1).